A 548-amino-acid chain; its full sequence is DNA-binding protein REPIN1 (548 aa).

Residues 1–47 (MLERRCRGPTAMGPAHPWLFSGPSQESSQPNRGLRYQGKSVAQPGGP) form a disordered region. Positions 22 to 31 (GPSQESSQPN) are enriched in polar residues. Serine 27 carries the post-translational modification Phosphoserine. An N6-acetyllysine modification is found at lysine 39. The segment at 53 to 75 (HRCAHCRKRFPGWVALWLHTRRC) adopts a C2H2-type 1; atypical zinc-finger fold. 2 consecutive C2H2-type zinc fingers follow at residues 81 to 103 (LPCH…LQVH) and 112 to 134 (FICH…LRAH). The C2H2-type 4; atypical zinc finger occupies 141 to 163 (ITCPECNKRFWRQKQLRAHLRRC). 11 consecutive C2H2-type zinc fingers follow at residues 173–195 (FICG…KRVH), 232–254 (FQCA…RRVH), 260–282 (HQCP…RRIH), 288–310 (YPCT…SKIH), 356–378 (HSCT…QRQH), 384–406 (FTCT…SRVH), 412–434 (FACE…RRDH), 440–462 (FVCP…RRIH), 468–490 (YVCP…RRIH), 496–518 (YACP…RKSH), and 524–546 (FCCA…QKKH). Lysine 272 is subject to N6-acetyllysine.

In terms of assembly, homodimers and homomultimers. Found in a complex with RIP60 and RIP100. Expressed in the liver and in subcutaneous and visceral adipose tissue.

It is found in the nucleus. It localises to the cytoplasm. Its subcellular location is the cytosol. Its function is as follows. Sequence-specific double-stranded DNA-binding protein. Binds ATT-rich and T-rich DNA sequences and facilitates DNA bending. May regulate the expression of genes involved in cellular fatty acid import, including SCARB1/CD36, and genes involved in lipid droplet formation. May regulate the expression of LCN2, and thereby influence iron metabolism and apoptosis-related pathways. May regulate the expression of genes involved in glucose transport. The sequence is that of DNA-binding protein REPIN1 (Repin1) from Rattus norvegicus (Rat).